The following is a 529-amino-acid chain: Bifunctional purine biosynthesis protein PurH (529 aa).

An MGS-like domain is found at 1-148; the sequence is MNNARPIRRA…KNHKDTTIIV (148 aa).

It belongs to the PurH family.

The enzyme catalyses (6R)-10-formyltetrahydrofolate + 5-amino-1-(5-phospho-beta-D-ribosyl)imidazole-4-carboxamide = 5-formamido-1-(5-phospho-D-ribosyl)imidazole-4-carboxamide + (6S)-5,6,7,8-tetrahydrofolate. The catalysed reaction is IMP + H2O = 5-formamido-1-(5-phospho-D-ribosyl)imidazole-4-carboxamide. The protein operates within purine metabolism; IMP biosynthesis via de novo pathway; 5-formamido-1-(5-phospho-D-ribosyl)imidazole-4-carboxamide from 5-amino-1-(5-phospho-D-ribosyl)imidazole-4-carboxamide (10-formyl THF route): step 1/1. It participates in purine metabolism; IMP biosynthesis via de novo pathway; IMP from 5-formamido-1-(5-phospho-D-ribosyl)imidazole-4-carboxamide: step 1/1. The chain is Bifunctional purine biosynthesis protein PurH from Shewanella pealeana (strain ATCC 700345 / ANG-SQ1).